A 178-amino-acid polypeptide reads, in one-letter code: Ribosome maturation factor RimM (178 aa).

A PRC barrel domain is found at 104–177 (SDEYYFYEVI…KIVVKLPEWL (74 aa)).

The protein belongs to the RimM family. In terms of assembly, binds ribosomal protein uS19.

It is found in the cytoplasm. In terms of biological role, an accessory protein needed during the final step in the assembly of 30S ribosomal subunit, possibly for assembly of the head region. Essential for efficient processing of 16S rRNA. May be needed both before and after RbfA during the maturation of 16S rRNA. It has affinity for free ribosomal 30S subunits but not for 70S ribosomes. The polypeptide is Ribosome maturation factor RimM (Thermosipho melanesiensis (strain DSM 12029 / CIP 104789 / BI429)).